A 152-amino-acid polypeptide reads, in one-letter code: Allergen Asp f 15 (152 aa).

The N-terminal stretch at 1 to 19 is a signal peptide; the sequence is MKFTTPISLISLFVSSALA. Disulfide bonds link Cys53–Cys90 and Cys93–Cys148.

It belongs to the cerato-platanin family.

It localises to the secreted. The sequence is that of Allergen Asp f 15 from Aspergillus fumigatus (strain ATCC MYA-4609 / CBS 101355 / FGSC A1100 / Af293) (Neosartorya fumigata).